A 162-amino-acid polypeptide reads, in one-letter code: NADH-quinone oxidoreductase subunit I (162 aa).

4Fe-4S ferredoxin-type domains are found at residues 52 to 82 (LRRY…IEAG) and 93 to 122 (VRYD…EGPN). [4Fe-4S] cluster contacts are provided by cysteine 62, cysteine 65, cysteine 68, cysteine 72, cysteine 102, cysteine 105, cysteine 108, and cysteine 112.

The protein belongs to the complex I 23 kDa subunit family. NDH-1 is composed of 14 different subunits. Subunits NuoA, H, J, K, L, M, N constitute the membrane sector of the complex. It depends on [4Fe-4S] cluster as a cofactor.

It localises to the cell inner membrane. It carries out the reaction a quinone + NADH + 5 H(+)(in) = a quinol + NAD(+) + 4 H(+)(out). Functionally, NDH-1 shuttles electrons from NADH, via FMN and iron-sulfur (Fe-S) centers, to quinones in the respiratory chain. The immediate electron acceptor for the enzyme in this species is believed to be ubiquinone. Couples the redox reaction to proton translocation (for every two electrons transferred, four hydrogen ions are translocated across the cytoplasmic membrane), and thus conserves the redox energy in a proton gradient. The protein is NADH-quinone oxidoreductase subunit I of Nitrobacter hamburgensis (strain DSM 10229 / NCIMB 13809 / X14).